Reading from the N-terminus, the 810-residue chain is Myoneurin (810 aa).

The BTB domain occupies 24–91 (CDCTVSIGQA…IYTGDLNMDR (68 aa)). Disordered stretches follow at residues 122-146 (NVGS…DYEP) and 169-466 (VSMD…VKPV). A compositionally biased stretch (polar residues) spans 173-183 (EAQSSSEQTPQ). Basic residues-rich tracts occupy residues 185 to 194 (VGKRGRKPKT) and 211 to 225 (GRGR…RPRV). Residues 229–238 (SSDSTDQSPA) show a composition bias toward polar residues. The span at 243–253 (SPNGSSTSRGS) shows a compositional bias: low complexity. Residues 254–266 (GRPRGRPRVRPLS) constitute a DNA-binding region (a.T hook 1). The span at 270-308 (EDPRNVEDDPAANKDQEVEKGNEEQKKETGEKDDGKNDT) shows a compositional bias: basic and acidic residues. The a.T hook 2 DNA-binding region spans 318–330 (KRGRGRPRIKPVS). Over residues 331–346 (TEDQTTNSENVTTNAE) the composition is skewed to polar residues. Positions 350–361 (EPAKTKDSEGTG) are enriched in basic and acidic residues. The segment at residues 361–373 (GRKRGRPRSKPVS) is a DNA-binding region (a.T hook 3). Residues 386-396 (SGEEAGEETSQ) show a composition bias toward acidic residues. Residues 419 to 428 (ISKRKRILSR) show a composition bias toward basic residues. The short motif at 428–432 (RKLKE) is the Nuclear localization signal element. Residues 435 to 460 (AGDEEEEEEEEMDDEFENDNEDWAGE) show a composition bias toward acidic residues. 7 C2H2-type zinc fingers span residues 472–494 (PICN…MRIH), 500–522 (YQCT…MRIH), 528–551 (FTCT…RMHH), 557–579 (YKCE…IRKH), 585–607 (YECG…KRRH), 613–635 (YICD…NRKH), and 641–663 (YICL…MDVH).

It belongs to the krueppel C2H2-type zinc-finger protein family.

The protein resides in the nucleus. The protein is Myoneurin (mynn) of Danio rerio (Zebrafish).